Reading from the N-terminus, the 453-residue chain is Putative amino acid/polyamine transporter MPH_07630_2 (453 aa).

3 helical membrane-spanning segments follow: residues 2–21, 30–50, and 81–101; these read IGFS…VLVV, VMIW…YSMA, and VCGW…NFIA. Residue Asn110 is glycosylated (N-linked (GlcNAc...) asparagine). 2 consecutive transmembrane segments (helical) span residues 121-141 and 151-171; these read WHAV…SIFL and AILI…LATN. Asn186 carries N-linked (GlcNAc...) asparagine glycosylation. 2 helical membrane passes run 193 to 213 and 231 to 251; these read AYAA…YDAP and IVMS…SLCF. A glycan (N-linked (GlcNAc...) asparagine) is linked at Asn274. Helical transmembrane passes span 277-297, 330-350, 358-378, and 403-423; these read GSVA…LVCA, LGVP…FNSI, FNTV…IPLL, and GLLA…TFNF. The N-linked (GlcNAc...) asparagine glycan is linked to Asn435.

The protein belongs to the amino acid-polyamine-organocation (APC) superfamily.

The protein resides in the membrane. This chain is Putative amino acid/polyamine transporter MPH_07630_2, found in Macrophomina phaseolina (strain MS6) (Charcoal rot fungus).